Consider the following 599-residue polypeptide: THO complex subunit 1 (599 aa).

Disordered regions lie at residues 376 to 395 and 497 to 599; these read EKQP…RRQR and KYQA…MPVS. The segment covering 502-522 has biased composition (basic and acidic residues); the sequence is PNEKAKRAKKEETKGGSHETE. Acidic residues predominate over residues 575–585; the sequence is QIEDGETEEAG.

In terms of assembly, component of the THO complex, which is composed of THO1, THO2, THO3, THO5, THO6 and THO7.

Its subcellular location is the nucleus. In terms of biological role, acts as a component of the THO subcomplex of the TREX complex which is thought to couple mRNA transcription, processing and nuclear export. Contributes to the integrity of the endogenous trans-acting small interfering RNA (ta-siRNA) pathway. May process or transport a long RNA molecule so that it can be a template for secondary siRNA production. May participate in the trafficking of siRNA precursors to the ARGONAUTE catalytic center. Required for the generation of functional messenger ribonucleoproteins (mRNPs). Plays an important roles in plant innate immunity. The polypeptide is THO complex subunit 1 (THO1) (Arabidopsis thaliana (Mouse-ear cress)).